Here is a 306-residue protein sequence, read N- to C-terminus: Manganese-binding lipoprotein MntA (306 aa).

The N-terminal stretch at Met1 to Gly18 is a signal peptide. Cys19 is lipidated: N-palmitoyl cysteine. Cys19 is lipidated: S-diacylglycerol cysteine. The Mn(2+) site is built by His66, His132, His198, and Asp278.

It belongs to the bacterial solute-binding protein 9 family. In terms of assembly, the complex is probably composed of two ATP-binding proteins (MntB), two transmembrane proteins (MntC and MntD) and a solute-binding protein (MntA). Interacts with FloT.

The protein resides in the cell membrane. The protein localises to the membrane raft. Its function is as follows. Probably part of ATP-binding cassette (ABC) transport system MntABCD involved in manganese import. Binds manganese and delivers it to the membrane permease for translocation into the cytoplasm. In Bacillus subtilis (strain 168), this protein is Manganese-binding lipoprotein MntA.